A 1390-amino-acid polypeptide reads, in one-letter code: DNA-directed RNA polymerase III subunit RPC1 (1390 aa).

Zn(2+)-binding residues include Cys69, Cys72, Cys79, His82, Cys109, and Cys112. Lys144 contacts DNA. Zn(2+) is bound by residues Cys156 and Cys159. Residues Lys167, Ser326, Lys348, Arg353, Arg360, and Arg366 each contribute to the DNA site. Position 445 is an N6-acetyllysine (Lys445). RNA is bound at residue Arg464. 3 residues coordinate Mg(2+): Asp499, Asp501, and Asp503. Asp503 contacts RNA. Residues 844–856 (PTEFFFHTMAGRE) are bridging helix. DNA is bound by residues Arg1159, Arg1305, and Lys1323.

This sequence belongs to the RNA polymerase beta' chain family. As to quaternary structure, component of the RNA polymerase III (Pol III) complex consisting of 17 subunits: a ten-subunit catalytic core composed of POLR3A/RPC1, POLR3B/RPC2, POLR1C/RPAC1, POLR1D/RPAC2, POLR3K/RPC10, POLR2E/RPABC1, POLR2F/RPABC2, POLR2H/RPABC3, POLR2K/RPABC4 and POLR2L/RPABC5; a mobile stalk composed of two subunits POLR3H/RPC8 and CRCP/RPC9, protruding from the core and functioning primarily in transcription initiation; and additional subunits homologous to general transcription factors of the RNA polymerase II machinery, POLR3C/RPC3-POLR3F/RPC6-POLR3G/RPC7 heterotrimer required for transcription initiation and POLR3D/RPC4-POLR3E/RPC5 heterodimer involved in both transcription initiation and termination. As part of the RNA polymerase III complex, interacts with PKP2. It depends on Mg(2+) as a cofactor.

The protein resides in the nucleus. Its subcellular location is the cytoplasm. The protein localises to the cytosol. It catalyses the reaction RNA(n) + a ribonucleoside 5'-triphosphate = RNA(n+1) + diphosphate. Catalytic core component of RNA polymerase III (Pol III), a DNA-dependent RNA polymerase which synthesizes small non-coding RNAs using the four ribonucleoside triphosphates as substrates. Synthesizes 5S rRNA, snRNAs, tRNAs and miRNAs from at least 500 distinct genomic loci. Pol III-mediated transcription cycle proceeds through transcription initiation, transcription elongation and transcription termination stages. During transcription initiation, Pol III is recruited to DNA promoters type I, II or III with the help of general transcription factors and other specific initiation factors. Once the polymerase has escaped from the promoter it enters the elongation phase during which RNA is actively polymerized, based on complementarity with the template DNA strand. Transcription termination involves the release of the RNA transcript and polymerase from the DNA. Forms Pol III active center together with the second largest subunit POLR3B/RPC2. Appends one nucleotide at a time to the 3' end of the nascent RNA, with POLR3A/RPC1 contributing a Mg(2+)-coordinating DxDGD motif, and POLR3B/RPC2 participating in the coordination of a second Mg(2+) ion and providing lysine residues believed to facilitate Watson-Crick base pairing between the incoming nucleotide and template base. Typically, Mg(2+) ions direct a 5' nucleoside triphosphate to form a phosphodiester bond with the 3' hydroxyl of the preceding nucleotide of the nascent RNA, with the elimination of pyrophosphate. Pol III plays a key role in sensing and limiting infection by intracellular bacteria and DNA viruses. Acts as a nuclear and cytosolic DNA sensor involved in innate immune response. Can sense non-self dsDNA that serves as template for transcription into dsRNA. The non-self RNA polymerase III transcripts, such as Epstein-Barr virus-encoded RNAs (EBERs) induce type I interferon and NF-kappa-B through the RIG-I pathway. This is DNA-directed RNA polymerase III subunit RPC1 from Bos taurus (Bovine).